A 357-amino-acid polypeptide reads, in one-letter code: Putative DNA directed RNA polymerase subunit R470 (357 aa).

This sequence belongs to the archaeal Rpo11/eukaryotic RPB11/RPC19 RNA polymerase subunit family.

Its subcellular location is the virion. The catalysed reaction is RNA(n) + a ribonucleoside 5'-triphosphate = RNA(n+1) + diphosphate. In Acanthamoeba polyphaga mimivirus (APMV), this protein is Putative DNA directed RNA polymerase subunit R470.